A 166-amino-acid chain; its full sequence is CDP-archaeol synthase (166 aa).

A run of 4 helical transmembrane segments spans residues 39 to 59, 61 to 81, 104 to 124, and 127 to 147; these read IRGFVGGVTAGILIGAVQMYA, ISGLVPWFPPHTLTAVILLAI, EWFLVDQLDFVVGALLLTLLF, and IWMLNTMTIPLLIVILVLTPL.

The protein belongs to the CDP-archaeol synthase family. Mg(2+) is required as a cofactor.

The protein localises to the cell membrane. It catalyses the reaction 2,3-bis-O-(geranylgeranyl)-sn-glycerol 1-phosphate + CTP + H(+) = CDP-2,3-bis-O-(geranylgeranyl)-sn-glycerol + diphosphate. It participates in membrane lipid metabolism; glycerophospholipid metabolism. Functionally, catalyzes the formation of CDP-2,3-bis-(O-geranylgeranyl)-sn-glycerol (CDP-archaeol) from 2,3-bis-(O-geranylgeranyl)-sn-glycerol 1-phosphate (DGGGP) and CTP. This reaction is the third ether-bond-formation step in the biosynthesis of archaeal membrane lipids. The chain is CDP-archaeol synthase from Methanospirillum hungatei JF-1 (strain ATCC 27890 / DSM 864 / NBRC 100397 / JF-1).